The sequence spans 579 residues: Nif-specific regulatory protein (579 aa).

Residues 40–187 (DPVAEVPQIF…MVASLLEQAL (148 aa)) form the GAF domain. In terms of domain architecture, Sigma-54 factor interaction spans 226-454 (IVGSSPAIAE…LENCVNRAAA (229 aa)). ATP-binding positions include 254–261 (GESGTGKE) and 317–326 (ADGGTLFLDE). Residues 464-536 (EELACRQGAC…PLRTKTAQLS (73 aa)) are inter-domain linker. A divalent metal cation is bound by residues cysteine 468 and cysteine 473. Residues 502 to 529 (RVSAPPPEPAPAPEPAPEAPPREEVPLR) form a disordered region. 7 tandem repeats follow at residues 505 to 506 (AP), 507 to 508 (PP), 509 to 510 (EP), 511 to 512 (AP), 513 to 514 (AP), 515 to 516 (EP), and 517 to 518 (AP). A 7 X 2 AA tandem repeats of X-P region spans residues 505-518 (APPPEPAPAPEPAP). The segment covering 505-520 (APPPEPAPAPEPAPEA) has biased composition (pro residues). Residues 537–579 (REELLRALESAGWVQAKAARLLGMTPRQIAYALQKFEIELRKI) form a C-terminal DNA-binding domain region. A DNA-binding region (H-T-H motif) is located at residues 551 to 570 (QAKAARLLGMTPRQIAYALQ).

In terms of assembly, interacts with sigma-54.

Functionally, required for activation of most nif operons, which are directly involved in nitrogen fixation. The polypeptide is Nif-specific regulatory protein (nifA1) (Rhodobacter capsulatus (Rhodopseudomonas capsulata)).